We begin with the raw amino-acid sequence, 438 residues long: Trigger factor (438 aa).

The PPIase FKBP-type domain maps to 160–245 (DDKVVIDFVG…VKKIQEAQLP (86 aa)).

The protein belongs to the FKBP-type PPIase family. Tig subfamily.

The protein resides in the cytoplasm. It carries out the reaction [protein]-peptidylproline (omega=180) = [protein]-peptidylproline (omega=0). Its function is as follows. Involved in protein export. Acts as a chaperone by maintaining the newly synthesized protein in an open conformation. Functions as a peptidyl-prolyl cis-trans isomerase. The chain is Trigger factor from Francisella philomiragia subsp. philomiragia (strain ATCC 25017 / CCUG 19701 / FSC 153 / O#319-036).